A 63-amino-acid polypeptide reads, in one-letter code: Hyphancin-3E (63 aa).

An N-terminal signal peptide occupies residues Met-1–Gly-22. A propeptide spans Ala-23 to Pro-26 (removed by a dipeptidylpeptidase). Residue Leu-61 is modified to Leucine amide.

The protein belongs to the cecropin family.

It localises to the secreted. In terms of biological role, has antibacterial activity. The protein is Hyphancin-3E of Hyphantria cunea (Fall webworm moth).